We begin with the raw amino-acid sequence, 575 residues long: Arginine--tRNA ligase (575 aa).

Residues 130–140 carry the 'HIGH' region motif; sequence ANPTGPMHVGH.

This sequence belongs to the class-I aminoacyl-tRNA synthetase family. As to quaternary structure, monomer.

It is found in the cytoplasm. It carries out the reaction tRNA(Arg) + L-arginine + ATP = L-arginyl-tRNA(Arg) + AMP + diphosphate. The protein is Arginine--tRNA ligase of Magnetococcus marinus (strain ATCC BAA-1437 / JCM 17883 / MC-1).